We begin with the raw amino-acid sequence, 323 residues long: Mas-related G-protein coupled receptor member X1 (323 aa).

Over 1-30 (MDPTISSLSTESTTLNKTGHPSCRPILTLS) the chain is Extracellular. The N-linked (GlcNAc...) asparagine glycan is linked to Asn16. A helical membrane pass occupies residues 31–51 (FLVPIITLLGLAGNTIVLWLL). At 52 to 59 (GFRMRRKA) the chain is on the cytoplasmic side. A helical transmembrane segment spans residues 60–80 (ISVYVLNLSLADSFFLCCHFI). The Extracellular portion of the chain corresponds to 81-100 (DSLMRIMNFYGIYAHKLSKE). The chain crosses the membrane as a helical span at residues 101-121 (ILGNAAIIPYISGLSILSAIS). Topologically, residues 122 to 143 (TERCLSVLWPIWYHCHRPRNMS) are cytoplasmic. A helical membrane pass occupies residues 144 to 164 (AIICVLIWVLSFLMGILDWFF). Residues 165–180 (SGFLGETHHHLWKNVD) lie on the Extracellular side of the membrane. The chain crosses the membrane as a helical span at residues 181 to 201 (FIVTAFLIFLFMLLFGSSLAL). Residues 202-226 (LVRILCGSRRKPLSRLYVTISLTVM) lie on the Cytoplasmic side of the membrane. A helical membrane pass occupies residues 227-247 (VYLICGLPLGLYLFLLYWFGI). Topologically, residues 248-258 (HLHYPFCHIYQ) are extracellular. A helical transmembrane segment spans residues 259 to 279 (VTVLLSCVNSSANPIIYFLVG). Residues 280–323 (SFRHRKKHRSLKMVLKRALEETPEEDEYTDSHVQKPTEISERRC) are Cytoplasmic-facing.

It belongs to the G-protein coupled receptor 1 family. Mas subfamily. Uniquely localized in a subset of small dorsal root and trigeminal sensory neurons. Associated preferentially with IB4 class of small-diameter somatosensory afferents (also known as nociceptors).

The protein resides in the cell membrane. Its function is as follows. Orphan receptor activated by neuropeptides terminating in Arg-Phe or Arg-Phe-amide. Mediates its action by association with G proteins that activate a phosphatidylinositol-calcium second messenger system. Its effect is mediated by G(q) and G(11) proteins. May regulate the function of nociceptive neurons by modulation of pain perception. In Rattus norvegicus (Rat), this protein is Mas-related G-protein coupled receptor member X1 (Mrgprx1).